Reading from the N-terminus, the 406-residue chain is Tyrosine--tRNA ligase (406 aa).

Tyr-35 contacts L-tyrosine. The short motif at 40 to 49 is the 'HIGH' region element; the sequence is PTADSLHVGH. Residues Tyr-168 and Gln-172 each contribute to the L-tyrosine site. Positions 228 to 232 match the 'KMSKS' region motif; the sequence is KMGKT. Position 231 (Lys-231) interacts with ATP. The 65-residue stretch at 340–404 folds into the S4 RNA-binding domain; sequence AELLDILVEA…RGKKNYNKIV (65 aa).

This sequence belongs to the class-I aminoacyl-tRNA synthetase family. TyrS type 1 subfamily. Homodimer.

The protein localises to the cytoplasm. The enzyme catalyses tRNA(Tyr) + L-tyrosine + ATP = L-tyrosyl-tRNA(Tyr) + AMP + diphosphate + H(+). Catalyzes the attachment of tyrosine to tRNA(Tyr) in a two-step reaction: tyrosine is first activated by ATP to form Tyr-AMP and then transferred to the acceptor end of tRNA(Tyr). The sequence is that of Tyrosine--tRNA ligase from Clostridium perfringens (strain 13 / Type A).